Consider the following 761-residue polypeptide: Signal transducer and transcription activator (761 aa).

The SH2 domain occupies 594 to 658 (WKAGCIMGFI…APWTARDFQV (65 aa)). Tyrosine 711 bears the Phosphotyrosine; by JAK mark.

This sequence belongs to the transcription factor STAT family. Forms a homodimer or a heterodimer with a related family member. In terms of processing, tyrosine phosphorylated by hopscotch. Phosphorylation is required for DNA-binding activity and dimerization.

Its subcellular location is the cytoplasm. It localises to the nucleus. Functionally, might play a role in signal transduction and activation of transcription. Plays an important role in the segmental pattern formation in the early embryo by activating specific stripes of pair rule gene expression in early development as part of the Janus kinase-STAT pathway. Might play a role in male germline stem cell maintenance. The polypeptide is Signal transducer and transcription activator (Stat92E) (Drosophila melanogaster (Fruit fly)).